The sequence spans 298 residues: MRAPSTSANLGSGFDVVAVAHDAYFAEAYIKLTSGCGVDIKFRGFNPGSDNTVKRAFQHLFERLGRCWGVEAEVVNNIPIARGLGSSGASAVAALAAFIREAGLRVEPAVVVEAAGLGEVAAAGSPHFDNVAAAALGGAVVIASVKPLELVKFMPKLIFVIGVPDVPPMPEKTKVMRSVLPREVSFRTYVAQLARVSALVAGFAKSDPRLVALGMSDEVVEPARAPYVPAYGRVKRYALEAGALAVSISGAGPSIIALVEEKNSDVVKAAVERAYIEEGLRAEVKVASITEGALAQNI.

79–89 (PIARGLGSSGA) is an ATP binding site.

It belongs to the GHMP kinase family. Homoserine kinase subfamily.

The protein resides in the cytoplasm. The catalysed reaction is L-homoserine + ATP = O-phospho-L-homoserine + ADP + H(+). It participates in amino-acid biosynthesis; L-threonine biosynthesis; L-threonine from L-aspartate: step 4/5. In terms of biological role, catalyzes the ATP-dependent phosphorylation of L-homoserine to L-homoserine phosphate. In Pyrobaculum islandicum (strain DSM 4184 / JCM 9189 / GEO3), this protein is Homoserine kinase.